Consider the following 98-residue polypeptide: MSMVYFNIFMAFTVSLVGLLMYRSHLMSSLLCLEGMMLSLFVLMSMTILNNHFTLASMAPIILLVFAACEAALGLSLLVMVSNTYGTDYVQNLNLLQC.

3 consecutive transmembrane segments (helical) span residues 1-21, 29-49, and 61-81; these read MSMV…GLLM, SLLC…MTIL, and IILL…LVMV.

This sequence belongs to the complex I subunit 4L family. As to quaternary structure, core subunit of respiratory chain NADH dehydrogenase (Complex I) which is composed of 45 different subunits.

The protein resides in the mitochondrion inner membrane. The catalysed reaction is a ubiquinone + NADH + 5 H(+)(in) = a ubiquinol + NAD(+) + 4 H(+)(out). Core subunit of the mitochondrial membrane respiratory chain NADH dehydrogenase (Complex I) which catalyzes electron transfer from NADH through the respiratory chain, using ubiquinone as an electron acceptor. Part of the enzyme membrane arm which is embedded in the lipid bilayer and involved in proton translocation. The sequence is that of NADH-ubiquinone oxidoreductase chain 4L (MT-ND4L) from Otaria byronia (South American sea lion).